We begin with the raw amino-acid sequence, 342 residues long: Anthranilate phosphoribosyltransferase (342 aa).

5-phospho-alpha-D-ribose 1-diphosphate is bound by residues Gly-79, 82–83 (GD), Thr-87, 89–92 (NIST), 107–115 (KHCNQRISS), and Ser-119. Gly-79 lines the anthranilate pocket. Ser-91 provides a ligand contact to Mg(2+). Position 110 (Asn-110) interacts with anthranilate. An anthranilate-binding site is contributed by Arg-165. 2 residues coordinate Mg(2+): Asp-223 and Glu-224.

This sequence belongs to the anthranilate phosphoribosyltransferase family. In terms of assembly, homodimer. Requires Mg(2+) as cofactor.

It catalyses the reaction N-(5-phospho-beta-D-ribosyl)anthranilate + diphosphate = 5-phospho-alpha-D-ribose 1-diphosphate + anthranilate. Its pathway is amino-acid biosynthesis; L-tryptophan biosynthesis; L-tryptophan from chorismate: step 2/5. Its function is as follows. Catalyzes the transfer of the phosphoribosyl group of 5-phosphorylribose-1-pyrophosphate (PRPP) to anthranilate to yield N-(5'-phosphoribosyl)-anthranilate (PRA). The chain is Anthranilate phosphoribosyltransferase from Buchnera aphidicola subsp. Acyrthosiphon pisum (strain Tuc7).